Consider the following 68-residue polypeptide: Lipopolysaccharide export system ATP-binding protein LptB (68 aa).

This sequence belongs to the ABC transporter superfamily. Outer membrane lipopolysaccharide export (TC 1.B.42) family. In terms of assembly, component of the lipopolysaccharide transport and assembly complex. The LptBFG transporter is composed of two ATP-binding proteins (LptB) and two transmembrane proteins (LptF and LptG).

It localises to the cytoplasm. The protein resides in the cell inner membrane. Its function is as follows. Part of the ABC transporter complex LptBFG involved in the translocation of lipopolysaccharide (LPS) from the inner membrane to the outer membrane. Probably responsible for energy coupling to the transport system. The protein is Lipopolysaccharide export system ATP-binding protein LptB (lptB) of Klebsiella oxytoca.